The sequence spans 1133 residues: Envelopment polyprotein (1133 aa).

Positions 1–16 (MWSLLLLAALVGQGFA) are cleaved as a signal peptide. Over 17 to 484 (LKNVFDMRIQ…PGFHGWATAA (468 aa)) the chain is Lumenal. 10 cysteine pairs are disulfide-bonded: Cys-61–Cys-155, Cys-107–Cys-126, Cys-131–Cys-136, Cys-173–Cys-183, Cys-208–Cys-245, Cys-232–Cys-349, Cys-374–Cys-433, Cys-378–Cys-387, Cys-403–Cys-422, and Cys-450–Cys-473. Asn-132 is a glycosylation site (N-linked (GlcNAc...) asparagine; by host). N-linked (GlcNAc...) asparagine; by host glycosylation is found at Asn-233 and Asn-345. An N-linked (GlcNAc...) asparagine; by host glycan is attached at Asn-397. Residues 485-504 (LLITFCFGWVLIPACTLAIL) form a helical membrane-spanning segment. At 505–626 (LVLKFFANIL…NLFRYKSRCY (122 aa)) the chain is on the cytoplasmic side. Residues 514–531 (LHTSNQENRFKAILRKIK) are binding to the ribonucleoprotein. 2 CCHC-type zinc fingers span residues 543–563 (CEIC…NLSC) and 568–589 (CPYC…YKVC). Binding to the ribonucleoprotein regions lie at residues 586–603 (YKVC…KKTV), 590–601 (QATHRFREDLKK), and 609–623 (GPGC…RYKS). One can recognise an ITAM domain in the interval 609–632 (GPGCYRTLNLFRYKSRCYILTMWT). A YxxL motif is present at residues 613-616 (YRTL). Residues 627-647 (ILTMWTLLLIIESILWAASAA) traverse the membrane as a helical segment. Topologically, residues 648 to 1105 (EIPLVPLWTD…VMGIINGNWV (458 aa)) are lumenal. 8 disulfides stabilise this stretch: Cys-733–Cys-768, Cys-737–Cys-775, Cys-749–Cys-883, Cys-763–Cys-894, Cys-778–Cys-902, Cys-804–Cys-813, Cys-821–Cys-830, and Cys-861–Cys-865. The interval 755-775 (YEYENSWACNPPDCPGVGTGC) is fusion loop. N-linked (GlcNAc...) asparagine; by host glycosylation is present at Asn-926. 5 disulfides stabilise this stretch: Cys-968–Cys-998, Cys-991–Cys-1043, Cys-1008–Cys-1013, Cys-1044–Cys-1049, and Cys-1083–Cys-1087. Residues 1106–1125 (VLIVLCVLLLFSLILLSILC) traverse the membrane as a helical segment. The segment at 1120-1133 (LLSILCPVRKHKKS) is binding to the ribonucleoprotein. Residues 1126–1133 (PVRKHKKS) are Cytoplasmic-facing.

Belongs to the hantavirus envelope glycoprotein family. In terms of assembly, homodimer. Homotetramer; forms heterotetrameric Gn-Gc spikes in the pre-fusion conformation. Interacts (via C-terminus) with the nucleoprotein. Interacts with host TUFM; this interaction contributes to the virus-induced degradation of mitochondria by autophagy, which leads to degradation of host MAVS and inhibition of type I interferon (IFN) responses. Interacts with host MAP1LC3B; this interaction contributes to the virus-induced degradation of mitochondria by autophagy, which leads to degradation of host MAVS and inhibition of type I interferon (IFN) responses. As to quaternary structure, homodimer. Homotetramer; forms heterotetrameric Gn-Gc spikes in the pre-fusion conformation. Homotrimer; forms homotrimer in the post-fusion conformation at acidic pH. Interacts (via C-terminus) with the nucleoprotein. Envelope polyprotein precursor is quickly cleaved in vivo just after synthesis, presumably by host signal peptidase.

It is found in the virion membrane. Its subcellular location is the host cell surface. The protein localises to the host Golgi apparatus membrane. It localises to the host endoplasmic reticulum membrane. The protein resides in the host mitochondrion. Its function is as follows. Forms homotetramers with glycoprotein C at the surface of the virion. Attaches the virion to host cell receptors including integrin ITGAV/ITGB3. This attachment induces virion internalization predominantly through clathrin-dependent endocytosis. Mediates the assembly and budding of infectious virus particles through its interaction with the nucleocapsid protein and the viral genome. May dysregulate normal immune and endothelial cell responses through an ITAM motif. Translocates to mitochondria, binds to host TUFM and recruits MAP1LC3B. These interactions induce mitochondrial autophagy and therefore destruction of host MAVS leading to inhibition of type I interferon (IFN) responses. Concomitant breakdown of glycoprotein N is apparently prevented by the nucleoprotein that may inhibit Gn-stimulated autophagosome-lysosome fusion. Interacts with the viral genomic RNA. Forms homotetramers with glycoprotein N at the surface of the virion. Attaches the virion to host cell receptors including integrin ITGAV/ITGB3. This attachment induces virion internalization predominantly through clathrin-dependent endocytosis. Class II fusion protein that promotes fusion of viral membrane with host endosomal membrane after endocytosis of the virion. This chain is Envelopment polyprotein (GP), found in Homo sapiens (Human).